Consider the following 146-residue polypeptide: Acidic phospholipase A2 S14-72F (146 aa).

An N-terminal signal peptide occupies residues 1-19; it reads MYPAHLLVLLAVCVSLLGA. A propeptide spanning residues 20-27 is cleaved from the precursor; the sequence is ASIPPQPL. Intrachain disulfides connect Cys-38/Cys-98, Cys-54/Cys-145, Cys-56/Cys-72, Cys-71/Cys-126, Cys-78/Cys-119, Cys-87/Cys-112, and Cys-105/Cys-117. Positions 55, 57, and 59 each coordinate Ca(2+). Residue His-75 is part of the active site. Asp-76 provides a ligand contact to Ca(2+). The active site involves Asp-120.

This sequence belongs to the phospholipase A2 family. Group I subfamily. D49 sub-subfamily. Ca(2+) serves as cofactor. As to expression, expressed by the venom gland.

Its subcellular location is the secreted. The enzyme catalyses a 1,2-diacyl-sn-glycero-3-phosphocholine + H2O = a 1-acyl-sn-glycero-3-phosphocholine + a fatty acid + H(+). Its function is as follows. Snake venom phospholipase A2 (PLA2) that inhibits collagen-induced platelet aggregation. PLA2 catalyzes the calcium-dependent hydrolysis of the 2-acyl groups in 3-sn-phosphoglycerides. The protein is Acidic phospholipase A2 S14-72F of Austrelaps superbus (Lowland copperhead snake).